The sequence spans 120 residues: 5-hydroxyisourate hydrolase 2 (120 aa).

Positions 10, 48, and 117 each coordinate substrate.

This sequence belongs to the transthyretin family. 5-hydroxyisourate hydrolase subfamily. In terms of assembly, homotetramer.

It catalyses the reaction 5-hydroxyisourate + H2O = 5-hydroxy-2-oxo-4-ureido-2,5-dihydro-1H-imidazole-5-carboxylate + H(+). Catalyzes the hydrolysis of 5-hydroxyisourate (HIU) to 2-oxo-4-hydroxy-4-carboxy-5-ureidoimidazoline (OHCU). This is 5-hydroxyisourate hydrolase 2 from Rhizobium meliloti (strain 1021) (Ensifer meliloti).